The chain runs to 264 residues: Thymidylate synthase (264 aa).

R21 provides a ligand contact to dUMP. A (6R)-5,10-methylene-5,6,7,8-tetrahydrofolate-binding site is contributed by H51. 126 to 127 (RR) is a dUMP binding site. C146 serves as the catalytic Nucleophile. Residues 166-169 (RSAD), N177, and 207-209 (HLY) each bind dUMP. D169 lines the (6R)-5,10-methylene-5,6,7,8-tetrahydrofolate pocket. (6R)-5,10-methylene-5,6,7,8-tetrahydrofolate is bound at residue A263.

The protein belongs to the thymidylate synthase family. Bacterial-type ThyA subfamily. As to quaternary structure, homodimer.

The protein resides in the cytoplasm. It carries out the reaction dUMP + (6R)-5,10-methylene-5,6,7,8-tetrahydrofolate = 7,8-dihydrofolate + dTMP. The protein operates within pyrimidine metabolism; dTTP biosynthesis. Functionally, catalyzes the reductive methylation of 2'-deoxyuridine-5'-monophosphate (dUMP) to 2'-deoxythymidine-5'-monophosphate (dTMP) while utilizing 5,10-methylenetetrahydrofolate (mTHF) as the methyl donor and reductant in the reaction, yielding dihydrofolate (DHF) as a by-product. This enzymatic reaction provides an intracellular de novo source of dTMP, an essential precursor for DNA biosynthesis. The polypeptide is Thymidylate synthase (Bartonella quintana (strain Toulouse) (Rochalimaea quintana)).